Reading from the N-terminus, the 308-residue chain is Ornithine carbamoyltransferase (308 aa).

Carbamoyl phosphate contacts are provided by residues 56 to 59 (STRT), Gln83, Arg107, and 134 to 137 (HPCQ). Residues Asn165, Asp225, and 229-230 (SM) contribute to the L-ornithine site. Carbamoyl phosphate contacts are provided by residues 266-267 (CL) and Arg294.

Belongs to the aspartate/ornithine carbamoyltransferase superfamily. OTCase family.

It localises to the cytoplasm. It catalyses the reaction carbamoyl phosphate + L-ornithine = L-citrulline + phosphate + H(+). It functions in the pathway amino-acid biosynthesis; L-arginine biosynthesis; L-arginine from L-ornithine and carbamoyl phosphate: step 1/3. Its function is as follows. Reversibly catalyzes the transfer of the carbamoyl group from carbamoyl phosphate (CP) to the N(epsilon) atom of ornithine (ORN) to produce L-citrulline. This chain is Ornithine carbamoyltransferase, found in Ruegeria pomeroyi (strain ATCC 700808 / DSM 15171 / DSS-3) (Silicibacter pomeroyi).